The sequence spans 515 residues: uncharacterized protein (515 aa).

The segment at 146–171 (SSEVDRNSETEGTREENSNTSDWDEQ) is disordered. Residues 148–162 (EVDRNSETEGTREEN) show a composition bias toward basic and acidic residues.

The protein resides in the cytoplasm. It is found in the nucleus. This is an uncharacterized protein from Schizosaccharomyces pombe (strain 972 / ATCC 24843) (Fission yeast).